Consider the following 236-residue polypeptide: UPF0502 protein Bcen2424_5610 (236 aa).

The protein belongs to the UPF0502 family.

The polypeptide is UPF0502 protein Bcen2424_5610 (Burkholderia cenocepacia (strain HI2424)).